We begin with the raw amino-acid sequence, 230 residues long: ATP synthase subunit a (230 aa).

6 consecutive transmembrane segments (helical) span residues 26 to 46 (ANAV…SLIA), 83 to 103 (FFPL…VGLI), 112 to 132 (NVNT…VVGI), 143 to 163 (FMGP…IGHL), 182 to 202 (LVLM…MMLM), and 203 to 223 (GVLV…IYIQ).

Belongs to the ATPase A chain family. As to quaternary structure, F-type ATPases have 2 components, CF(1) - the catalytic core - and CF(0) - the membrane proton channel. CF(1) has five subunits: alpha(3), beta(3), gamma(1), delta(1), epsilon(1). CF(0) has three main subunits: a(1), b(2) and c(9-12). The alpha and beta chains form an alternating ring which encloses part of the gamma chain. CF(1) is attached to CF(0) by a central stalk formed by the gamma and epsilon chains, while a peripheral stalk is formed by the delta and b chains.

The protein localises to the cell inner membrane. In terms of biological role, key component of the proton channel; it plays a direct role in the translocation of protons across the membrane. This is ATP synthase subunit a from Trichlorobacter lovleyi (strain ATCC BAA-1151 / DSM 17278 / SZ) (Geobacter lovleyi).